The primary structure comprises 864 residues: MLKEKYGFKEVEDKCNILWEGSKVYRWNGEKDNTFTIDTPPPTISGKLHIGHIFSYCHTDFIARFQRMLGKDVFYPIGFDDNGLPTERLVEQTYKTRAKEVGREKLIEMCHEVIEKSKQEFKELFKSVGISYDWDLEYHTISKETVTLSQMSFIDLYNKGYAYRKMQPILWDPVDKTAIAQAEIEDKVFESSLNTIVFSTEENEQINIATTRPELLPACVAVFCHPEDARYTHLIGKTTVVPITETKVPIIADDKVKIDKGTGLVMCCTFGDELDIYWQQKHNLPMKIIIDQDGRMSLHSVHGQKEEIWIPVSGHWDDTIGATGMTGERATQMTKEGGCDQKEEWIPVSATRMTDDILNEINGLKVTAARKRIIEILTEKGLLVESTNISHSVKCAERSGAPLEILPTYQWFIKTLEQKAQILDKVKECNWHPSNMRKRMEVWIEGLNWDWCISRQRYFGVPFPAWYSKRKGEEGKIILAEIKALPIDPSKDLPKGYSKEEIIPDQDVMDTWATSSITPQLSALAVNSEFSLPNHRYDTIFPADLRSQSHEIIRTWAFYTILKAHYHANSLPWKNIMISGWCLADDKKKMSKSKGNIITPHIILETYGADVVRYWAANSRLGVDTVYSENTFKIGKRLVTKLWNASKFVSMFMEKHQVMSINSAHETMDKWILSKLYKVIERATNNLLQFEYCEALGAIEEFFWKDFCDSYLELVKKRAYGSSEATLSAKQSLAYVLNVILRLFAPFLPYITEEIYHQLYSYNSVHNQSNWPSKEELIYDKYSEEMGDNVIQILNIIRKIKADNNVSVKHLIKKLMIKADLRKDKLDQSAQNDLQAVCNAETIEWMQSELETEDEKYIVNIDLY.

The 'HIGH' region signature appears at 42 to 52; it reads PTISGKLHIGH. The short motif at 589 to 593 is the 'KMSKS' region element; sequence KMSKS. Lysine 592 is an ATP binding site.

The protein belongs to the class-I aminoacyl-tRNA synthetase family. ValS type 2 subfamily. In terms of assembly, monomer.

It is found in the cytoplasm. The enzyme catalyses tRNA(Val) + L-valine + ATP = L-valyl-tRNA(Val) + AMP + diphosphate. Catalyzes the attachment of valine to tRNA(Val). As ValRS can inadvertently accommodate and process structurally similar amino acids such as threonine, to avoid such errors, it has a 'posttransfer' editing activity that hydrolyzes mischarged Thr-tRNA(Val) in a tRNA-dependent manner. The chain is Valine--tRNA ligase from Wolbachia pipientis wMel.